Here is an 86-residue protein sequence, read N- to C-terminus: Neurotoxin-like protein NTL2 (86 aa).

An N-terminal signal peptide occupies residues 1 to 21 (MKTLLLSLVVVTIVCLDLGYT). Cystine bridges form between cysteine 24/cysteine 45, cysteine 38/cysteine 63, cysteine 67/cysteine 78, and cysteine 79/cysteine 84.

It belongs to the three-finger toxin family. Short-chain subfamily. Orphan group I sub-subfamily. Expressed by the venom gland.

It is found in the secreted. The polypeptide is Neurotoxin-like protein NTL2 (Naja atra (Chinese cobra)).